Reading from the N-terminus, the 445-residue chain is Allantoinase (445 aa).

Residues histidine 63, histidine 65, lysine 150, histidine 186, histidine 238, and aspartate 311 each coordinate Zn(2+). N6-carboxylysine is present on lysine 150.

It belongs to the metallo-dependent hydrolases superfamily. Allantoinase family. In terms of assembly, homotetramer. It depends on Zn(2+) as a cofactor. Carboxylation allows a single lysine to coordinate two zinc ions.

It carries out the reaction (S)-allantoin + H2O = allantoate + H(+). The protein operates within nitrogen metabolism; (S)-allantoin degradation; allantoate from (S)-allantoin: step 1/1. In terms of biological role, catalyzes the conversion of allantoin (5-ureidohydantoin) to allantoic acid by hydrolytic cleavage of the five-member hydantoin ring. The polypeptide is Allantoinase (Streptomyces avermitilis (strain ATCC 31267 / DSM 46492 / JCM 5070 / NBRC 14893 / NCIMB 12804 / NRRL 8165 / MA-4680)).